The chain runs to 219 residues: Ribosomal RNA large subunit methyltransferase E (219 aa).

S-adenosyl-L-methionine contacts are provided by Gly60, Trp62, Asp85, Asp101, and Asp126. The active-site Proton acceptor is Lys166.

This sequence belongs to the class I-like SAM-binding methyltransferase superfamily. RNA methyltransferase RlmE family.

The protein localises to the cytoplasm. The catalysed reaction is uridine(2552) in 23S rRNA + S-adenosyl-L-methionine = 2'-O-methyluridine(2552) in 23S rRNA + S-adenosyl-L-homocysteine + H(+). In terms of biological role, specifically methylates the uridine in position 2552 of 23S rRNA at the 2'-O position of the ribose in the fully assembled 50S ribosomal subunit. This chain is Ribosomal RNA large subunit methyltransferase E, found in Bordetella avium (strain 197N).